Reading from the N-terminus, the 254-residue chain is Translation initiation factor 2 subunit alpha (254 aa).

The S1 motif domain occupies 10 to 81 (GDLVVVKITE…ERKVVDLSLK (72 aa)).

It belongs to the eIF-2-alpha family. As to quaternary structure, heterotrimer composed of an alpha, a beta and a gamma chain.

Functionally, eIF-2 functions in the early steps of protein synthesis by forming a ternary complex with GTP and initiator tRNA. The sequence is that of Translation initiation factor 2 subunit alpha from Thermoplasma acidophilum (strain ATCC 25905 / DSM 1728 / JCM 9062 / NBRC 15155 / AMRC-C165).